We begin with the raw amino-acid sequence, 218 residues long: MPMTLGYWNTRGLTHSIRLLLEYTDSSYEEKRYVMGDAPNFDRSQWLSEKFNLGLDFPNLPYLIDGSHKVTQSNAILRYLGRKHNLCGETEEERIRVDTLENQVMDTRIQLMIVCCSPDFEKQKPEFLKAIPEKMKLYSEFLGKRPWFAGDKVTYVDFLAYDILDQYRMFEPKCLDAFPNLRDFLARFEGLKKISAYMKSSRFLPRPVFTKIAQWGTD.

Positions 2-88 (PMTLGYWNTR…YLGRKHNLCG (87 aa)) constitute a GST N-terminal domain. Residues 7–8 (YW), 46–50 (WLSEK), and 59–60 (NL) each bind glutathione. Lys50 participates in a covalent cross-link: Glycyl lysine isopeptide (Lys-Gly) (interchain with G-Cter in SUMO2). A Glycyl lysine isopeptide (Lys-Gly) (interchain with G-Cter in SUMO2) cross-link involves residue Lys69. 72–73 (QS) provides a ligand contact to glutathione. The 119-residue stretch at 90-208 (TEEERIRVDT…KSSRFLPRPV (119 aa)) folds into the GST C-terminal domain.

Belongs to the GST superfamily. Mu family. As to quaternary structure, homodimer.

The protein resides in the cytoplasm. The catalysed reaction is RX + glutathione = an S-substituted glutathione + a halide anion + H(+). In terms of biological role, conjugation of reduced glutathione to a wide number of exogenous and endogenous hydrophobic electrophiles. This chain is Glutathione S-transferase Mu 3 (Gstm3), found in Mus musculus (Mouse).